A 283-amino-acid polypeptide reads, in one-letter code: 4-diphosphocytidyl-2-C-methyl-D-erythritol kinase (283 aa).

The active site involves K8. ATP is bound at residue 90–100 (PIGSGLAGGSS). D132 is an active-site residue.

Belongs to the GHMP kinase family. IspE subfamily.

The catalysed reaction is 4-CDP-2-C-methyl-D-erythritol + ATP = 4-CDP-2-C-methyl-D-erythritol 2-phosphate + ADP + H(+). It functions in the pathway isoprenoid biosynthesis; isopentenyl diphosphate biosynthesis via DXP pathway; isopentenyl diphosphate from 1-deoxy-D-xylulose 5-phosphate: step 3/6. Catalyzes the phosphorylation of the position 2 hydroxy group of 4-diphosphocytidyl-2C-methyl-D-erythritol. The protein is 4-diphosphocytidyl-2-C-methyl-D-erythritol kinase of Chlamydia muridarum (strain MoPn / Nigg).